The primary structure comprises 246 residues: Myelin protein P0 (246 aa).

Positions 1–27 (MFRDLKPAYLFCCSVLYAFSVLRPSQG) are cleaved as a signal peptide. In terms of domain architecture, Ig-like V-type spans 28–143 (ISVSTHHNLH…VGTSSDVHLT (116 aa)). At 28 to 150 (ISVSTHHNLH…HLTVYDKIPP (123 aa)) the chain is on the extracellular side. A disulfide bridge connects residues C48 and C125. N-linked (GlcNAc...) (complex) asparagine glycosylation is present at N120. A helical membrane pass occupies residues 151 to 178 (VGAGVVSGAIIGTFLGIILLIVGGLYLF). Over 179–246 (RYIVRRRARS…KLSESKRDKK (68 aa)) the chain is Cytoplasmic. Residues 200 to 246 (AERGKVSGKAGTVSKGPVLYATLDQSKSGKGASEKKSKLSESKRDKK) form a disordered region. Residues 231–246 (ASEKKSKLSESKRDKK) show a composition bias toward basic and acidic residues.

Belongs to the myelin P0 protein family. In terms of processing, N-glycan is sulfated. As to expression, found only in peripheral nervous system Schwann cells.

It is found in the cell membrane. Its function is as follows. Creation of an extracellular membrane face which guides the wrapping process and ultimately compacts adjacent lamellae. The polypeptide is Myelin protein P0 (mpz) (Heterodontus francisci (Horn shark)).